The chain runs to 121 residues: Large ribosomal subunit protein uL14 (121 aa).

The protein belongs to the universal ribosomal protein uL14 family. Part of the 50S ribosomal subunit. Forms a cluster with proteins L3 and L19. In the 70S ribosome, L14 and L19 interact and together make contacts with the 16S rRNA in bridges B5 and B8.

Binds to 23S rRNA. Forms part of two intersubunit bridges in the 70S ribosome. This chain is Large ribosomal subunit protein uL14, found in Aquifex pyrophilus.